Consider the following 365-residue polypeptide: ATP-dependent (S)-NAD(P)H-hydrate dehydratase (365 aa).

The N-terminal 43 residues, 1–43, are a transit peptide targeting the chloroplast; sequence MLVKPSIISGLVRLTSHSPSSSSSVLRRQEFLVRTLCGSPIIR. N-acetylserine is present on Leu2. The region spanning 53-361 is the YjeF C-terminal domain; the sequence is AESVLRTVTP…ECLGESLEDI (309 aa). (6S)-NADPHX is bound by residues Gly169 and 222–228; that span reads NVNEYKR. ATP-binding positions include 262–266 and 281–290; these read KGKSD and GSPRRCGGQG. Position 291 (Asp291) interacts with (6S)-NADPHX.

Belongs to the NnrD/CARKD family. Mg(2+) is required as a cofactor.

It localises to the plastid. The protein localises to the chloroplast. The protein resides in the cytoplasm. It catalyses the reaction (6S)-NADHX + ATP = ADP + phosphate + NADH + H(+). It carries out the reaction (6S)-NADPHX + ATP = ADP + phosphate + NADPH + H(+). In terms of biological role, catalyzes the dehydration of the S-form of NAD(P)HX at the expense of ATP, which is converted to ADP. Together with NAD(P)HX epimerase, which catalyzes the epimerization of the S- and R-forms, the enzyme allows the repair of both epimers of NAD(P)HX, a damaged form of NAD(P)H that is a result of enzymatic or heat-dependent hydration. This is ATP-dependent (S)-NAD(P)H-hydrate dehydratase from Arabidopsis thaliana (Mouse-ear cress).